The sequence spans 163 residues: Phosphopantetheine adenylyltransferase (163 aa).

Position 11 (Thr-11) interacts with substrate. ATP contacts are provided by residues 11–12 (TF) and His-19. Positions 43, 75, and 89 each coordinate substrate. ATP is bound by residues 90 to 92 (GLR), Glu-100, and 125 to 131 (YMFISAT).

Belongs to the bacterial CoaD family. In terms of assembly, homohexamer. The cofactor is Mg(2+).

It is found in the cytoplasm. It catalyses the reaction (R)-4'-phosphopantetheine + ATP + H(+) = 3'-dephospho-CoA + diphosphate. The protein operates within cofactor biosynthesis; coenzyme A biosynthesis; CoA from (R)-pantothenate: step 4/5. Its function is as follows. Reversibly transfers an adenylyl group from ATP to 4'-phosphopantetheine, yielding dephospho-CoA (dPCoA) and pyrophosphate. In Azoarcus sp. (strain BH72), this protein is Phosphopantetheine adenylyltransferase.